The following is a 541-amino-acid chain: Eukaryotic translation initiation factor 3 subunit D-1 (541 aa).

Residues 98-136 (VQKPPHQRGRFRNMRGRGGRGRNPRGGLNNHHHHGMTTL) are disordered. Residues 100–120 (KPPHQRGRFRNMRGRGGRGRN) show a composition bias toward basic residues.

This sequence belongs to the eIF-3 subunit D family. In terms of assembly, component of the eukaryotic translation initiation factor 3 (eIF-3) complex. The eIF-3 complex interacts with pix.

Its subcellular location is the cytoplasm. Its function is as follows. mRNA cap-binding component of the eukaryotic translation initiation factor 3 (eIF-3) complex, which is involved in protein synthesis of a specialized repertoire of mRNAs and, together with other initiation factors, stimulates binding of mRNA and methionyl-tRNAi to the 40S ribosome. The eIF-3 complex specifically targets and initiates translation of a subset of mRNAs involved in cell proliferation. In the eIF-3 complex, eif3d specifically recognizes and binds the 7-methylguanosine cap of a subset of mRNAs. This Drosophila persimilis (Fruit fly) protein is Eukaryotic translation initiation factor 3 subunit D-1.